The following is a 359-amino-acid chain: Peptide chain release factor 1 (359 aa).

The residue at position 235 (Q235) is an N5-methylglutamine. Over residues 283-294 (SKADEERSESRK) the composition is skewed to basic and acidic residues. Residues 283–309 (SKADEERSESRKSQVGSGDRSERIRTY) are disordered.

The protein belongs to the prokaryotic/mitochondrial release factor family. Post-translationally, methylated by PrmC. Methylation increases the termination efficiency of RF1.

It is found in the cytoplasm. Its function is as follows. Peptide chain release factor 1 directs the termination of translation in response to the peptide chain termination codons UAG and UAA. This Mesorhizobium japonicum (strain LMG 29417 / CECT 9101 / MAFF 303099) (Mesorhizobium loti (strain MAFF 303099)) protein is Peptide chain release factor 1.